A 426-amino-acid polypeptide reads, in one-letter code: Glutamate-1-semialdehyde 2,1-aminomutase (426 aa).

K265 bears the N6-(pyridoxal phosphate)lysine mark.

It belongs to the class-III pyridoxal-phosphate-dependent aminotransferase family. HemL subfamily. As to quaternary structure, homodimer. Pyridoxal 5'-phosphate serves as cofactor.

It localises to the cytoplasm. The enzyme catalyses (S)-4-amino-5-oxopentanoate = 5-aminolevulinate. It participates in porphyrin-containing compound metabolism; protoporphyrin-IX biosynthesis; 5-aminolevulinate from L-glutamyl-tRNA(Glu): step 2/2. In Shigella flexneri serotype 5b (strain 8401), this protein is Glutamate-1-semialdehyde 2,1-aminomutase.